The following is a 437-amino-acid chain: Interactor protein for cytohesin exchange factors 1 (437 aa).

Positions 41-140 (HADCQGWLYK…WLNKLGSAVI (100 aa)) constitute a PH domain. Disordered stretches follow at residues 143–225 (ESTT…PDTV) and 273–307 (LSSD…ETKV). Residues 151–162 (CYSESEQEDPEI) show a composition bias toward acidic residues. Over residues 172–200 (ASQTQSLTAQQASSSSPSLSGTSYSFSSL) the composition is skewed to low complexity. Residues 201–214 (ENTVKTPSSFPSSL) show a composition bias toward polar residues. Low complexity predominate over residues 273–283 (LSSDDTSSLSS). 2 CRAC domain regions span residues 315–320 (KLYKSL) and 339–348 (LRKSFVKRCK). Residues 389–437 (KYREWKVMNTLLIQDIYQQQRASPAPDDTDDTPQELKKSPSSPSVENSI) form a required for interaction with CYTH2 region. Positions 406-437 (QQQRASPAPDDTDDTPQELKKSPSSPSVENSI) are disordered. The residue at position 411 (Ser-411) is a Phosphoserine. Positions 427 to 437 (SPSSPSVENSI) are enriched in polar residues.

As to quaternary structure, interacts with guanine-nucleotide exchange factors PSCD1, PSCD2, PSCD3 and PSCD4. Interacts (via C-terminus) with cytohesin-2 CYTH2.

The protein resides in the cytoplasm. The protein localises to the cell membrane. In terms of biological role, enhances the promotion of guanine-nucleotide exchange by PSCD2 on ARF6 in a concentration-dependent manner. This is Interactor protein for cytohesin exchange factors 1 (IPCEF1) from Homo sapiens (Human).